Consider the following 423-residue polypeptide: G-protein coupled receptor 83 (423 aa).

Residues 1–17 (MKVPPVLLLFLLSSVRA) form the signal peptide. At 18–71 (TEQPQVVTEHPSMEAALTGPNASSHFWANYTFSDWQNFVGRRRYGAESQNPTVK) the chain is on the extracellular side. Asn38 and Asn46 each carry an N-linked (GlcNAc...) asparagine glycan. Residues 72–92 (ALLIVAYSFTIVFSLFGNVLV) traverse the membrane as a helical segment. The Cytoplasmic segment spans residues 93–107 (CHVIFKNQRMHSATS). A helical transmembrane segment spans residues 108 to 129 (LFIVNLAVADIMITLLNTPFTL). The Extracellular segment spans residues 130 to 145 (VRFVNSTWVFGKGMCH). Asn134 carries an N-linked (GlcNAc...) asparagine glycan. A disulfide bond links Cys144 and Cys224. A helical membrane pass occupies residues 146–167 (VSRFAQYCSLHVSALTLTAIAV). Residues 168 to 186 (DRHQVIMHPLKPRISITKG) are Cytoplasmic-facing. Residues 187 to 208 (VIYIAVIWVMATFFSLPHAICQ) traverse the membrane as a helical segment. At 209 to 238 (KLFTFKYSEDIVRSLCLPDFPEPADLFWKY) the chain is on the extracellular side. Residues 239-260 (LDLATFILLYLLPLFIISVAYA) traverse the membrane as a helical segment. Topologically, residues 261-293 (RVAKKLWLCNTIGDVTTEQYLALRRKKKTTVKM) are cytoplasmic. A helical transmembrane segment spans residues 294–315 (LVLVVVLFALCWFPLNCYVLLL). The Extracellular segment spans residues 316–327 (SSKAIHTNNALY). The helical transmembrane segment at 328–348 (FAFHWFAMSSTCYNPFIYCWL) threads the bilayer. The Cytoplasmic segment spans residues 349–423 (NENFRVELKA…SSVEPVVAMS (75 aa)). The tract at residues 389 to 423 (SHGRRAPLPNHHLPSSQIQSGKTDLSSVEPVVAMS) is disordered. Positions 401 to 414 (LPSSQIQSGKTDLS) are enriched in polar residues.

Belongs to the G-protein coupled receptor 1 family. In terms of tissue distribution, predominantly expressed in the brain, with moderate expression in the hypothalamus. Expressed in the thymus.

The protein localises to the cell membrane. G-protein coupled receptor for PEN, a neuropeptide produced from the precursor protein, proSAAS (encoded by PCSK1N). Acts through a G(i)- and G(q)-alpha-alpha-mediated pathway in response to PEN. Plays a role in food intake and body weight regulation. May contribute to the regulation of anxiety-related behaviors. The protein is G-protein coupled receptor 83 of Mus musculus (Mouse).